A 268-amino-acid polypeptide reads, in one-letter code: Tryptophan synthase alpha chain (268 aa).

Active-site proton acceptor residues include glutamate 49 and aspartate 60.

Belongs to the TrpA family. As to quaternary structure, tetramer of two alpha and two beta chains.

The enzyme catalyses (1S,2R)-1-C-(indol-3-yl)glycerol 3-phosphate + L-serine = D-glyceraldehyde 3-phosphate + L-tryptophan + H2O. The protein operates within amino-acid biosynthesis; L-tryptophan biosynthesis; L-tryptophan from chorismate: step 5/5. Functionally, the alpha subunit is responsible for the aldol cleavage of indoleglycerol phosphate to indole and glyceraldehyde 3-phosphate. This Sodalis glossinidius (strain morsitans) protein is Tryptophan synthase alpha chain.